The primary structure comprises 222 residues: Cytochrome b6 (222 aa).

The chain crosses the membrane as a helical span at residues 39–59 (IFYCLGGLTLTCFLIQFATGF). Y41 is a binding site for heme b. C42 is a heme c binding site. Residues R90, H93, R94, H107, and R110 each coordinate heme b. The next 3 helical transmembrane spans lie at 97 to 117 (ASMM…TGGF), 123 to 143 (LTWV…VTGY), and 193 to 213 (LHTF…FLMI). Heme b contacts are provided by H194 and H209. The heme c site is built by R214 and I218. Residue S219 participates in heme b binding.

The protein belongs to the cytochrome b family. PetB subfamily. As to quaternary structure, the 4 large subunits of the cytochrome b6-f complex are cytochrome b6, subunit IV (17 kDa polypeptide, PetD), cytochrome f and the Rieske protein, while the 4 small subunits are PetG, PetL, PetM and PetN. The complex functions as a dimer. Requires heme b as cofactor. It depends on heme c as a cofactor.

Its subcellular location is the cellular thylakoid membrane. In terms of biological role, component of the cytochrome b6-f complex, which mediates electron transfer between photosystem II (PSII) and photosystem I (PSI), cyclic electron flow around PSI, and state transitions. The polypeptide is Cytochrome b6 (Synechocystis sp. (strain ATCC 27184 / PCC 6803 / Kazusa)).